The sequence spans 487 residues: UDP-N-acetylmuramate--L-alanine ligase (487 aa).

122–128 serves as a coordination point for ATP; the sequence is GTHGKTS.

Belongs to the MurCDEF family.

It localises to the cytoplasm. It catalyses the reaction UDP-N-acetyl-alpha-D-muramate + L-alanine + ATP = UDP-N-acetyl-alpha-D-muramoyl-L-alanine + ADP + phosphate + H(+). The protein operates within cell wall biogenesis; peptidoglycan biosynthesis. Its function is as follows. Cell wall formation. The sequence is that of UDP-N-acetylmuramate--L-alanine ligase from Corynebacterium urealyticum (strain ATCC 43042 / DSM 7109).